Here is a 359-residue protein sequence, read N- to C-terminus: 4-galactosyl-N-acetylglucosaminide 3-alpha-L-fucosyltransferase 9 (359 aa).

Over 1–11 the chain is Cytoplasmic; the sequence is MTSTSKGILRP. Residues 12–32 form a helical; Signal-anchor for type II membrane protein membrane-spanning segment; sequence FLIVCIILGCFMACLLIYIKP. The Lumenal segment spans residues 33-359; the sequence is TNSWVFSPME…VGNLEKWFWN (327 aa). N-linked (GlcNAc...) asparagine glycosylation is present at Asn-62. The tract at residues 63-168 is acceptor-binding; that stretch reads ETTILVWVWP…RRDSDIQVPY (106 aa). Gln-75 lines the a beta-D-galactosyl-(1-&gt;4)-N-acetyl-beta-D-glucosaminyl derivative pocket. Disulfide bonds link Cys-82–Cys-335, Cys-91–Cys-338, and Cys-190–Cys-238. Residue Asn-101 is glycosylated (N-linked (GlcNAc...) asparagine). Residue Glu-137 coordinates a beta-D-galactosyl-(1-&gt;4)-N-acetyl-beta-D-glucosaminyl derivative. Glu-137 functions as the Nucleophile in the catalytic mechanism. GDP-beta-L-fucose is bound at residue Glu-137. N-linked (GlcNAc...) asparagine glycosylation occurs at Asn-153. GDP-beta-L-fucose contacts are provided by Tyr-168, Val-192, Ser-194, Asn-195, Arg-202, Val-226, Tyr-241, Asn-246, Tyr-252, Glu-255, and Lys-256. Residues 169–326 form a donor-binding region; sequence GFLTVSTNPF…NWRKDFTVNL (158 aa). An acceptor-binding region spans residues 327 to 359; it reads PRFWESHACLACDHVKRHQEYKSVGNLEKWFWN.

This sequence belongs to the glycosyltransferase 10 family. In terms of assembly, homodimer. N-glycosylated with complex-type N-glycans. As to expression, mainly detected in brain and kidney.

The protein localises to the golgi apparatus. The protein resides in the trans-Golgi network membrane. It is found in the golgi apparatus membrane. It catalyses the reaction a beta-D-galactosyl-(1-&gt;4)-N-acetyl-beta-D-glucosaminyl derivative + GDP-beta-L-fucose = a beta-D-galactosyl-(1-&gt;4)-[alpha-L-fucosyl-(1-&gt;3)]-N-acetyl-beta-D-glucosaminyl derivative + GDP + H(+). The catalysed reaction is an alpha-Neu5Ac-(2-&gt;3)-beta-D-Gal-(1-&gt;4)-beta-D-GlcNAc-(1-&gt;3)-beta-D-Gal-(1-&gt;4)-beta-D-GlcNAc derivative + GDP-beta-L-fucose = an alpha-Neu5Ac-(2-&gt;3)-beta-D-Gal-(1-&gt;4)-beta-D-GlcNAc-(1-&gt;3)-beta-D-Gal-(1-&gt;4)-[alpha-L-Fuc-(1-&gt;3)]-beta-D-GlcNAc derivative + GDP + H(+). The enzyme catalyses alpha-N-glycoloylneuraminosyl-(2-&gt;3)-beta-D-galactosyl-(1-&gt;4)-N-acetyl-beta-D-glucosaminyl-(1-&gt;3)-beta-D-galactosyl-(1-&gt;4)-N-acetyl-beta-D-glucosaminyl-(1-&gt;3)-beta-D-galactosyl-(1-&gt;4)-beta-D-glucosyl-(1&lt;-&gt;1')-ceramide + GDP-beta-L-fucose = alpha-N-glycoloylneuraminosyl-(2-&gt;3)-beta-D-galactosyl-(1-&gt;4)-N-acetyl-beta-D-glucosaminyl-(1-&gt;3)-beta-D-galactosyl-(1-&gt;4)-[alpha-L-fucosyl-(1-&gt;3)]-N-acetyl-beta-D-glucosaminyl-(1-&gt;3)-beta-D-galactosyl-(1-&gt;4)-beta-D-glucosyl-(1&lt;-&gt;1')-ceramide + GDP + H(+). It carries out the reaction alpha-D-galactosyl-(1-&gt;3)-beta-D-galactosyl-(1-&gt;4)-N-acetyl-beta-D-glucosaminyl-(1-&gt;3)-beta-D-galactosyl-(1-&gt;4)-beta-D-glucosyl-(1&lt;-&gt;1')-ceramide + GDP-beta-L-fucose = a neolactoside IV(3)-alpha-Gal,III(3)-alpha-Fuc-nLc4Cer + GDP + H(+). It catalyses the reaction a neolactoside nLc4Cer + GDP-beta-L-fucose = a neolactoside III(3)-alpha-Fuc-nLc4Cer + GDP + H(+). The catalysed reaction is an N-acetyl-alpha-neuraminyl-(2-&gt;3)-beta-D-galactosyl-(1-&gt;4)-N-acetyl-beta-D-glucosaminyl derivative + GDP-beta-L-fucose = an alpha-Neu5Ac-(2-&gt;3)-beta-D-Gal-(1-&gt;4)-[alpha-L-Fuc-(1-&gt;3)]-beta-D-GlcNAc derivative + GDP + H(+). The enzyme catalyses beta-D-Gal-(1-&gt;4)-beta-D-GlcNAc-(1-&gt;3)-beta-D-Gal-(1-&gt;4)-D-Glc + GDP-beta-L-fucose = beta-D-Gal-(1-&gt;4)-[alpha-L-Fuc-(1-&gt;3)]-beta-D-GlcNAc-(1-&gt;3)-beta-D-Gal-(1-&gt;4)-D-Glc + GDP + H(+). It carries out the reaction an alpha-L-Fuc-(1-&gt;2)-beta-D-Gal-(1-&gt;4)-beta-D-GlcNAc derivative + GDP-beta-L-fucose = an alpha-L-Fuc-(1-&gt;2)-beta-D-Gal-(1-&gt;4)-[alpha-L-Fuc-(1-&gt;3)]-beta-D-GlcNAc derivative + GDP + H(+). Its pathway is protein modification; protein glycosylation. It participates in glycolipid biosynthesis. With respect to regulation, activated by Mn2+. Catalyzes alpha(1-&gt;3) linkage of fucosyl moiety transferred from GDP-beta-L-fucose to N-acetyl glucosamine (GlcNAc) within type 2 lactosamine (LacNAc, beta-D-Gal-(1-&gt;4)-beta-D-GlcNAc-) glycan attached to glycolipids and N- or O-linked glycoproteins. Fucosylates distal type 2 LacNAc and its fucosylated (H-type 2 LacNAc) and sialylated (sialyl-type 2 LacNAc) derivatives to form Lewis x (Lex) (CD15) and Lewis y (Ley) antigenic epitopes involved in cell adhesion and differentiation. Generates Lex epitopes in the brain, presumably playing a role in the maintenance of neuronal stemness and neurite outgrowth in progenitor neural cells. Fucosylates the internal type 2 LacNAc unit of the polylactosamine chain to form VIM-2 antigen that serves as recognition epitope for SELE. Can also modify milk oligosaccharides in particular type 2 tetrasaccharide LNnT. This chain is 4-galactosyl-N-acetylglucosaminide 3-alpha-L-fucosyltransferase 9, found in Mus musculus (Mouse).